Consider the following 139-residue polypeptide: Ribulose bisphosphate carboxylase small subunit (139 aa).

This sequence belongs to the RuBisCO small chain family. In terms of assembly, heterohexadecamer of 8 large and 8 small subunits.

It localises to the plastid. Its subcellular location is the chloroplast. In terms of biological role, ruBisCO catalyzes two reactions: the carboxylation of D-ribulose 1,5-bisphosphate, the primary event in carbon dioxide fixation, as well as the oxidative fragmentation of the pentose substrate in the photorespiration process. Both reactions occur simultaneously and in competition at the same active site. Although the small subunit is not catalytic it is essential for maximal activity. The polypeptide is Ribulose bisphosphate carboxylase small subunit (Olisthodiscus luteus (Marine phytoflagellate)).